Here is a 212-residue protein sequence, read N- to C-terminus: uncharacterized protein (212 aa).

Positions 1–20 (MKNLTIGAIFLIFFAVSAFA) are cleaved as a signal peptide.

It localises to the virion. This is an uncharacterized protein from Acanthamoeba polyphaga (Amoeba).